A 223-amino-acid chain; its full sequence is Ribonuclease HII (223 aa).

The RNase H type-2 domain maps to 32–223 (LYIAGVDEVG…LKKRYRDYMS (192 aa)). The a divalent metal cation site is built by Asp38, Glu39, and Asp130.

It belongs to the RNase HII family. Mn(2+) serves as cofactor. Requires Mg(2+) as cofactor.

It is found in the cytoplasm. The enzyme catalyses Endonucleolytic cleavage to 5'-phosphomonoester.. Endonuclease that specifically degrades the RNA of RNA-DNA hybrids. The protein is Ribonuclease HII of Bartonella henselae (strain ATCC 49882 / DSM 28221 / CCUG 30454 / Houston 1) (Rochalimaea henselae).